Reading from the N-terminus, the 385-residue chain is Tumor protein p53-inducible protein 13 (385 aa).

An N-terminal signal peptide occupies residues 1–27 (MVHPPPPPPRLLLVALVGLLSLREVVA). At 28 to 301 (EPAEEAGTPC…ARGPTPRTEE (274 aa)) the chain is on the extracellular side. The segment at 242-297 (APVSLTTGGPGGNGRSRTEAQMPSGQGNHGGCACPGQVSPAPRAAGPPRVARGPTP) is disordered. The segment covering 281 to 297 (PAPRAAGPPRVARGPTP) has biased composition (low complexity). The chain crosses the membrane as a helical span at residues 302–322 (AAWAAMALTFLLVLLTLATLC). Over 323–385 (TRLHRNFRRS…DSGPDSESSD (63 aa)) the chain is Cytoplasmic. Positions 359–369 (SRRIKRSRRRP) are enriched in basic residues. Positions 359–385 (SRRIKRSRRRPLLPPTPDSGPDSESSD) are disordered.

The protein resides in the cell membrane. It is found in the cytoplasm. Functionally, may act as a tumor suppressor. Inhibits tumor cell growth, when overexpressed. This is Tumor protein p53-inducible protein 13 (Tp53i13) from Mus musculus (Mouse).